A 657-amino-acid chain; its full sequence is Hemocyanin (657 aa).

An N-linked (GlcNAc...) asparagine glycan is attached at asparagine 167. Cu cation is bound by residues histidine 194, histidine 198, histidine 224, histidine 344, histidine 348, and histidine 384. 2 disulfide bridges follow: cysteine 483-cysteine 502 and cysteine 562-cysteine 609.

This sequence belongs to the tyrosinase family. Hemocyanin subfamily. It consists of at least four very similar subunits. In terms of tissue distribution, hemolymph.

It is found in the secreted. The protein localises to the extracellular space. Hemocyanins are copper-containing oxygen carriers occurring freely dissolved in the hemolymph of many mollusks and arthropods. This is Hemocyanin from Palinurus vulgaris (European spiny lobster).